Consider the following 250-residue polypeptide: Protein BTG4 (250 aa).

The protein belongs to the BTG family. Interacts with CNOT7 and EIF4E. Interacts with CNOT8. In terms of tissue distribution, expressed in oocytes. Expressed in testis and in olfactory epithelium.

In terms of biological role, adapter protein that bridges CNOT7, a catalytic subunit of the CCR4-NOT complex, to EIF4E, and facilitates maternal mRNAs decay during the maturation of oocytes and in the fertilized egg. It is therefore required for the maternal-zygotic transition (MZT), zygotic cleavage and initiation of embryonic development. The sequence is that of Protein BTG4 (Btg4) from Mus musculus (Mouse).